The following is a 325-amino-acid chain: Tyrosine phosphatase H2 (325 aa).

In terms of domain architecture, Tyrosine-protein phosphatase spans 27–295 (VTREHEKIMA…FFCYRVMERY (269 aa)). The active-site Phosphocysteine intermediate is cysteine 236.

The protein belongs to the protein-tyrosine phosphatase family.

The protein localises to the host cytoplasm. It carries out the reaction O-phospho-L-tyrosyl-[protein] + H2O = L-tyrosyl-[protein] + phosphate. Its function is as follows. Suppresses host immune cell adhesion and phagocytosis. Triggers host mitochondrial membrane depolarization and caspase-dependent apoptosis. The polypeptide is Tyrosine phosphatase H2 (H2) (Microplitis demolitor bracovirus (isolate Webb) (MdBV)).